Consider the following 344-residue polypeptide: Putative glycosyltransferase EpsH (344 aa).

It belongs to the glycosyltransferase 2 family.

May be involved in the production of the exopolysaccharide (EPS) component of the extracellular matrix during biofilm formation. EPS is responsible for the adhesion of chains of cells into bundles. Required for biofilm maintenance. The chain is Putative glycosyltransferase EpsH (epsH) from Bacillus subtilis (strain 168).